Here is a 384-residue protein sequence, read N- to C-terminus: Alpha-2B adrenergic receptor (384 aa).

Residues 1 to 25 form a helical membrane-spanning segment; that stretch reads AIAAVTTFLILFTVFGNALVILAVL. Residues 26-36 lie on the Cytoplasmic side of the membrane; the sequence is TSRSLRAPQNL. The chain crosses the membrane as a helical span at residues 37 to 62; the sequence is FLVSLAAADILVATLIXPFSLANELL. The Extracellular portion of the chain corresponds to 63-72; it reads GYWYFWHTWC. A disulfide bridge connects residues Cys-72 and Cys-151. Residues 73–95 traverse the membrane as a helical segment; sequence EVYLALXVLXCTSSIVHLCAISL. The Cytoplasmic segment spans residues 96-117; sequence DRYWAVSRALEYNSKRTPRRIX. The helical transmembrane segment at 118–140 threads the bilayer; the sequence is GIILTVWLIAAAISLPPLIYKGD. Residues 141–156 are Extracellular-facing; the sequence is QGPQPHGRPQCRLNQE. A helical transmembrane segment spans residues 157–180; it reads AWYILSSSIGSFFAPCLIMILVYL. At 181-348 the chain is on the cytoplasmic side; sequence RIYLIAKRRN…LTREKRFTFV (168 aa). The interval 193–306 is disordered; the sequence is GPRAQGASKG…SXGSPQLQQP (114 aa). Residues 288–306 show a composition bias toward low complexity; the sequence is PEALPASPASXGSPQLQQP. Residues 349-372 traverse the membrane as a helical segment; the sequence is LAVVIGVXVLCWFPFFXSYSLGAI. Topologically, residues 373-381 are extracellular; the sequence is CPQHCTVXH. The helical transmembrane segment at 382 to 384 threads the bilayer; that stretch reads GLF.

This sequence belongs to the G-protein coupled receptor 1 family. Adrenergic receptor subfamily. ADRA2B sub-subfamily. In terms of assembly, interacts with RAB26. Interacts with PPP1R9B. Interacts with GGA1, GGA2 and GGA3.

The protein resides in the cell membrane. Alpha-2 adrenergic receptors mediate the catecholamine-induced inhibition of adenylate cyclase through the action of G proteins. This chain is Alpha-2B adrenergic receptor (ADRA2B), found in Echinops telfairi (Lesser hedgehog tenrec).